The sequence spans 161 residues: Phosphopantetheine adenylyltransferase (161 aa).

Ser-11 is a substrate binding site. Residues Ser-11–Phe-12 and His-19 each bind ATP. Substrate contacts are provided by Lys-43, Leu-75, and Arg-89. Residues Gly-90–Arg-92, Glu-100, and Tyr-125–Ser-131 contribute to the ATP site.

Belongs to the bacterial CoaD family. In terms of assembly, homohexamer. It depends on Mg(2+) as a cofactor.

The protein resides in the cytoplasm. The enzyme catalyses (R)-4'-phosphopantetheine + ATP + H(+) = 3'-dephospho-CoA + diphosphate. Its pathway is cofactor biosynthesis; coenzyme A biosynthesis; CoA from (R)-pantothenate: step 4/5. Its function is as follows. Reversibly transfers an adenylyl group from ATP to 4'-phosphopantetheine, yielding dephospho-CoA (dPCoA) and pyrophosphate. This Citrifermentans bemidjiense (strain ATCC BAA-1014 / DSM 16622 / JCM 12645 / Bem) (Geobacter bemidjiensis) protein is Phosphopantetheine adenylyltransferase.